We begin with the raw amino-acid sequence, 154 residues long: 6,7-dimethyl-8-ribityllumazine synthase (154 aa).

5-amino-6-(D-ribitylamino)uracil-binding positions include phenylalanine 23, 57–59 (AFE), and 81–83 (AVI). 86 to 87 (AT) contacts (2S)-2-hydroxy-3-oxobutyl phosphate. Histidine 89 (proton donor) is an active-site residue. Residue phenylalanine 114 coordinates 5-amino-6-(D-ribitylamino)uracil. Arginine 128 contacts (2S)-2-hydroxy-3-oxobutyl phosphate.

This sequence belongs to the DMRL synthase family.

The catalysed reaction is (2S)-2-hydroxy-3-oxobutyl phosphate + 5-amino-6-(D-ribitylamino)uracil = 6,7-dimethyl-8-(1-D-ribityl)lumazine + phosphate + 2 H2O + H(+). It participates in cofactor biosynthesis; riboflavin biosynthesis; riboflavin from 2-hydroxy-3-oxobutyl phosphate and 5-amino-6-(D-ribitylamino)uracil: step 1/2. Catalyzes the formation of 6,7-dimethyl-8-ribityllumazine by condensation of 5-amino-6-(D-ribitylamino)uracil with 3,4-dihydroxy-2-butanone 4-phosphate. This is the penultimate step in the biosynthesis of riboflavin. The protein is 6,7-dimethyl-8-ribityllumazine synthase of Nautilia profundicola (strain ATCC BAA-1463 / DSM 18972 / AmH).